Here is a 207-residue protein sequence, read N- to C-terminus: Cytochrome c biogenesis ATP-binding export protein CcmA (207 aa).

The ABC transporter domain maps to 4–207 (LEARELLCER…RISLTQTRAA (204 aa)). 36–43 (GSNGAGKT) is a binding site for ATP.

The protein belongs to the ABC transporter superfamily. CcmA exporter (TC 3.A.1.107) family. As to quaternary structure, the complex is composed of two ATP-binding proteins (CcmA) and two transmembrane proteins (CcmB).

Its subcellular location is the cell inner membrane. It carries out the reaction heme b(in) + ATP + H2O = heme b(out) + ADP + phosphate + H(+). In terms of biological role, part of the ABC transporter complex CcmAB involved in the biogenesis of c-type cytochromes; once thought to export heme, this seems not to be the case, but its exact role is uncertain. Responsible for energy coupling to the transport system. In Shigella sonnei (strain Ss046), this protein is Cytochrome c biogenesis ATP-binding export protein CcmA.